A 633-amino-acid chain; its full sequence is Glutamyl-tRNA(Gln) amidotransferase subunit E (633 aa).

The protein belongs to the GatB/GatE family. GatE subfamily. In terms of assembly, heterodimer of GatD and GatE.

It catalyses the reaction L-glutamyl-tRNA(Gln) + L-glutamine + ATP + H2O = L-glutaminyl-tRNA(Gln) + L-glutamate + ADP + phosphate + H(+). In terms of biological role, allows the formation of correctly charged Gln-tRNA(Gln) through the transamidation of misacylated Glu-tRNA(Gln) in organisms which lack glutaminyl-tRNA synthetase. The reaction takes place in the presence of glutamine and ATP through an activated gamma-phospho-Glu-tRNA(Gln). The GatDE system is specific for glutamate and does not act on aspartate. The chain is Glutamyl-tRNA(Gln) amidotransferase subunit E from Methanosarcina barkeri (strain Fusaro / DSM 804).